The following is a 130-amino-acid chain: Small ribosomal subunit protein uS9 (130 aa).

This sequence belongs to the universal ribosomal protein uS9 family.

The sequence is that of Small ribosomal subunit protein uS9 from Shewanella amazonensis (strain ATCC BAA-1098 / SB2B).